A 285-amino-acid chain; its full sequence is Putative ABC transporter ATP-binding protein CPE0195 (285 aa).

The ABC transporter domain occupies 6–242 (LKVEELNYNY…KEVIRKVNLR (237 aa)). Residue 39-46 (GGNGVGKS) participates in ATP binding.

Belongs to the ABC transporter superfamily.

Its subcellular location is the cell membrane. Its function is as follows. Probably part of an ABC transporter complex. Responsible for energy coupling to the transport system. The chain is Putative ABC transporter ATP-binding protein CPE0195 from Clostridium perfringens (strain 13 / Type A).